An 87-amino-acid polypeptide reads, in one-letter code: Putative regulatory protein BCG9842_B1272 (87 aa).

The protein belongs to the RemA family.

This Bacillus cereus (strain G9842) protein is Putative regulatory protein BCG9842_B1272.